The following is a 356-amino-acid chain: DNA polymerase IV (356 aa).

The UmuC domain maps to 6-187 (IIHIDMDYFF…LDIGDFPGVG (182 aa)). Positions 10 and 105 each coordinate Mg(2+). Glu-106 is a catalytic residue.

Belongs to the DNA polymerase type-Y family. Monomer. Mg(2+) is required as a cofactor.

The protein resides in the cytoplasm. It carries out the reaction DNA(n) + a 2'-deoxyribonucleoside 5'-triphosphate = DNA(n+1) + diphosphate. Poorly processive, error-prone DNA polymerase involved in untargeted mutagenesis. Copies undamaged DNA at stalled replication forks, which arise in vivo from mismatched or misaligned primer ends. These misaligned primers can be extended by PolIV. Exhibits no 3'-5' exonuclease (proofreading) activity. May be involved in translesional synthesis, in conjunction with the beta clamp from PolIII. In Staphylococcus epidermidis (strain ATCC 35984 / DSM 28319 / BCRC 17069 / CCUG 31568 / BM 3577 / RP62A), this protein is DNA polymerase IV.